The primary structure comprises 366 residues: Protein BIG GRAIN 1-like B (366 aa).

Disordered regions lie at residues D42–R73 and F129–S148. Residues Q56–R73 show a composition bias toward basic and acidic residues.

This sequence belongs to the BIG GRAIN 1 (BG1) plant protein family.

It is found in the cell membrane. Involved in auxin transport. Regulator of the auxin signaling pathway. This Arabidopsis thaliana (Mouse-ear cress) protein is Protein BIG GRAIN 1-like B.